Here is a 700-residue protein sequence, read N- to C-terminus: Small ribosomal subunit protein uS3c (700 aa).

Insert stretches follow at residues N88–F196 and K282–R587.

It belongs to the universal ribosomal protein uS3 family. In terms of assembly, part of the 30S ribosomal subunit.

The protein localises to the plastid. It localises to the chloroplast. The chain is Small ribosomal subunit protein uS3c (rps3) from Tetradesmus obliquus (Green alga).